The following is a 509-amino-acid chain: Steroid 17-alpha-hydroxylase/17,20 lyase (509 aa).

N202 is a binding site for substrate. Heme is bound at residue C442.

It belongs to the cytochrome P450 family. Heme serves as cofactor.

The protein localises to the endoplasmic reticulum membrane. It localises to the microsome membrane. The catalysed reaction is a C21-steroid + reduced [NADPH--hemoprotein reductase] + O2 = a 17alpha-hydroxy-C21-steroid + oxidized [NADPH--hemoprotein reductase] + H2O + H(+). It carries out the reaction progesterone + reduced [NADPH--hemoprotein reductase] + O2 = 17alpha-hydroxyprogesterone + oxidized [NADPH--hemoprotein reductase] + H2O + H(+). The enzyme catalyses pregnenolone + reduced [NADPH--hemoprotein reductase] + O2 = 17alpha-hydroxypregnenolone + oxidized [NADPH--hemoprotein reductase] + H2O + H(+). It catalyses the reaction 17alpha-hydroxyprogesterone + reduced [NADPH--hemoprotein reductase] + O2 = androst-4-ene-3,17-dione + acetate + oxidized [NADPH--hemoprotein reductase] + H2O + 2 H(+). The catalysed reaction is 17alpha-hydroxyprogesterone + reduced [NADPH--hemoprotein reductase] + O2 = 16alpha,17alpha-dihydroxyprogesterone + oxidized [NADPH--hemoprotein reductase] + H2O + H(+). It carries out the reaction 16alpha,17alpha-dihydroxyprogesterone + reduced [NADPH--hemoprotein reductase] + O2 = 6beta,16alpha,17alpha-trihydroxyprogesterone + oxidized [NADPH--hemoprotein reductase] + H2O + H(+). The enzyme catalyses 17alpha-hydroxypregnenolone + reduced [NADPH--hemoprotein reductase] + O2 = 3beta-hydroxyandrost-5-en-17-one + acetate + oxidized [NADPH--hemoprotein reductase] + H2O + 2 H(+). It catalyses the reaction 16alpha,17alpha-dihydroxypregnenolone + reduced [NADPH--hemoprotein reductase] + O2 = 3beta,16alpha-dihydroxy-androst-5-en-17-one + acetate + oxidized [NADPH--hemoprotein reductase] + H2O + 2 H(+). The catalysed reaction is 3beta-hydroxyandrost-5-en-17-one + reduced [NADPH--hemoprotein reductase] + O2 = 3beta,16alpha-dihydroxy-androst-5-en-17-one + oxidized [NADPH--hemoprotein reductase] + H2O + H(+). It carries out the reaction androst-4-ene-3,17-dione + reduced [NADPH--hemoprotein reductase] + O2 = 16alpha-hydroxyandrost-4-ene-3,17-dione + oxidized [NADPH--hemoprotein reductase] + H2O + H(+). It functions in the pathway steroid hormone biosynthesis. Its pathway is steroid biosynthesis; glucocorticoid biosynthesis. Its activity is regulated as follows. Regulated predominantly by intracellular cAMP levels. The 17,20-lyase activity is stimulated by cytochrome b5, which acts as an allosteric effector increasing the Vmax of the lyase activity. Its function is as follows. A cytochrome P450 monooxygenase involved in corticoid and androgen biosynthesis. Catalyzes 17-alpha hydroxylation of C21 steroids, which is common for both pathways. A second oxidative step, required only for androgen synthesis, involves an acyl-carbon cleavage. The 17-alpha hydroxy intermediates, as part of adrenal glucocorticoids biosynthesis pathway, are precursors of cortisol. Hydroxylates steroid hormones, pregnenolone and progesterone to form 17-alpha hydroxy metabolites, followed by the cleavage of the C17-C20 bond to form C19 steroids, dehydroepiandrosterone (DHEA) and androstenedione. Has 16-alpha hydroxylase activity. Catalyzes 16-alpha hydroxylation of 17-alpha hydroxy pregnenolone, followed by the cleavage of the C17-C20 bond to form 16-alpha-hydroxy DHEA. Also 16-alpha hydroxylates androgens, relevant for estriol synthesis. Mechanistically, uses molecular oxygen inserting one oxygen atom into a substrate, and reducing the second into a water molecule, with two electrons provided by NADPH via cytochrome P450 reductase (CPR; NADPH-ferrihemoprotein reductase). The polypeptide is Steroid 17-alpha-hydroxylase/17,20 lyase (CYP17A1) (Bison bison (American bison)).